Reading from the N-terminus, the 355-residue chain is Ataxin-3-like protein (355 aa).

Positions 1–180 (MDFIFHEKQE…DCEADQLLQI (180 aa)) constitute a Josephin domain. The Nucleophile role is filled by Cys-14. The active-site Proton acceptor is the His-119. The active site involves Asn-134. 2 disordered regions span residues 209-230 (LEKV…EDFQ) and 253-331 (LSMQ…DISE). Acidic residues predominate over residues 215-228 (ESDESGTSDQDEED). 2 UIM domains span residues 224–243 (QDEE…TNRE) and 244–258 (DEHL…MQGS). Residues 253 to 276 (LSMQGSSGNTSQDLPKTSCVTPAS) are compositionally biased toward polar residues. A compositionally biased stretch (basic and acidic residues) spans 278–293 (QPKKIKEDYFEKHQQE).

As to expression, widely expressed.

It is found in the nucleus. It carries out the reaction Thiol-dependent hydrolysis of ester, thioester, amide, peptide and isopeptide bonds formed by the C-terminal Gly of ubiquitin (a 76-residue protein attached to proteins as an intracellular targeting signal).. Deubiquitinating enzyme that cleaves both 'Lys-48'-linked and 'Lys-63'-linked poly-ubiquitin chains (in vitro). Acts as a deubiquitinating enzyme for the transcription factor KLF5, playing a role in the regulation of KLF5 stability. In Homo sapiens (Human), this protein is Ataxin-3-like protein.